Consider the following 436-residue polypeptide: Hydrolyase ccsE (436 aa).

Ser-249 (nucleophile) is an active-site residue.

This sequence belongs to the AB hydrolase superfamily. FUS2 hydrolase family. Homodimer.

Its pathway is mycotoxin biosynthesis. Hydrolyase; part of the gene cluster that mediates the biosynthesis of a family of the mycotoxins cytochalasins E and K. The hybrid PKS-NRPS synthetase ccsA and the enoyl reductase ccsC are responsible for fusion of phenylalanine with an octaketide backbone and subsequent release of the stable tetramic acid precursor. The polyketide synthase module (PKS) of the PKS-NRPS ccsA is responsible for the synthesis of the octaketide backbone. The downstream nonribosomal peptide synthetase (NRPS) amidates the carboxyl end of the octaketide with a phenylalanine. A reductase-like domain (R) at the C-terminus catalyzes the reductive release of the polyketide-amino acid intermediate. Because ccsA lacks a designated enoylreductase (ER) domain, the required activity is provided the enoyl reductase ccsC. Upon formation of the 11-membered carbocycle-fused perhydroisoindolone intermediate, a number of oxidative steps are required to afford the final cytochalasin E and K, including two hydroxylations at C17 and C18, one alcohol oxidation at C17, one epoxidation at C6 and C7 and two Baeyer-Villiger oxidations. The oxidative modification at C17, C18 and the C6-C7 epoxidation are likely to be catalyzed by the two cytochrome P450 oxygenases ccsD and ccsG. CcsD may be responsible for the epoxidation of the C6-C7 double bond. CcsG may be responsible for the successive oxidative modifications at C17 and C18. The double Baeyer-Villiger oxidations of ketocytochalasin to precytochalasin and cytochalasin Z(16) are among the final steps leading to cytochalasin E and K and are catalyzed by ccsB. The first oxygen insertion step follows that of the classic BVMO mechanism, generating the ester precytochalasin. Release of precytochalasin into an aqueous environment can generate the shunt product iso-precytochalasin through spontaneous isomerization. Alternatively, precytochalasin can undergo further oxidation by ccsB to yield the in-line carbonate-containing cytochalasin Z(16). Cytochalasin Z(16) is a precursor to cytochalasin E and cytochalasin K, whereas iso-precytochalasin is a precursor to cytochalasin Z(17) and rosellichalasin. The hydrolyase ccsE may catalyze hydrolysis of epoxide bond in cytochalasin E to afford cytochalasin K. The function of ccsF has not been assigned but it may play a role in post-PKS-NRPS biosynthetic step, resistance or transport of cytochalasins and related PKS-NRPS products. The protein is Hydrolyase ccsE of Aspergillus clavatus (strain ATCC 1007 / CBS 513.65 / DSM 816 / NCTC 3887 / NRRL 1 / QM 1276 / 107).